A 72-amino-acid chain; its full sequence is Large ribosomal subunit protein bL28 (72 aa).

This sequence belongs to the bacterial ribosomal protein bL28 family.

The polypeptide is Large ribosomal subunit protein bL28 (Chlorobaculum tepidum (strain ATCC 49652 / DSM 12025 / NBRC 103806 / TLS) (Chlorobium tepidum)).